The following is a 352-amino-acid chain: MSLRKIIHIDMDAFYASVELREQPHLKGRPVVVAWEGARSVICAASYEARQFGLHSAMSVATVKRLCPQAVYVPPHFDLYRQVSAQIHAVFRRYTDLIEPLSLDEAYLDVTRNFKNIPYAGEVAKEIRAAIFAETGLTASAGIAPNKFLAKIASDWRKPNGQFVLPPHKVMAFLETLPLGKIPGAGKVTLKKMQSLGMRTAGDLRRFERGELLNHFGRYGYRLYDLARGTDEHPVKAERERLQISTEITLPEDLPLGQAAGHLPHLAEDLWRQITRKNVEAQSVTLKLKTYDFRIITRTLTYSSVLPDCAALLQAAQMLMARVPPQTEDAFRLIGIGVGRLVPKNQQQDLWA.

Residues 6–186 form the UmuC domain; the sequence is IIHIDMDAFY…LPLGKIPGAG (181 aa). Mg(2+)-binding residues include D10 and D104. Residue E105 is part of the active site.

It belongs to the DNA polymerase type-Y family. Monomer. Mg(2+) is required as a cofactor.

The protein resides in the cytoplasm. It catalyses the reaction DNA(n) + a 2'-deoxyribonucleoside 5'-triphosphate = DNA(n+1) + diphosphate. Functionally, poorly processive, error-prone DNA polymerase involved in untargeted mutagenesis. Copies undamaged DNA at stalled replication forks, which arise in vivo from mismatched or misaligned primer ends. These misaligned primers can be extended by PolIV. Exhibits no 3'-5' exonuclease (proofreading) activity. May be involved in translesional synthesis, in conjunction with the beta clamp from PolIII. In Neisseria gonorrhoeae (strain ATCC 700825 / FA 1090), this protein is DNA polymerase IV.